The chain runs to 220 residues: Ribose-5-phosphate isomerase A (220 aa).

Substrate-binding positions include 25-28 (TGST), 80-83 (DGAD), and 93-96 (KGGG). Glutamate 102 functions as the Proton acceptor in the catalytic mechanism. Lysine 120 contacts substrate.

Belongs to the ribose 5-phosphate isomerase family. Homodimer.

It carries out the reaction aldehydo-D-ribose 5-phosphate = D-ribulose 5-phosphate. It functions in the pathway carbohydrate degradation; pentose phosphate pathway; D-ribose 5-phosphate from D-ribulose 5-phosphate (non-oxidative stage): step 1/1. In terms of biological role, catalyzes the reversible conversion of ribose-5-phosphate to ribulose 5-phosphate. This chain is Ribose-5-phosphate isomerase A, found in Bacillus anthracis.